Consider the following 1037-residue polypeptide: Protein brain tumor (1037 aa).

2 disordered regions span residues 29 to 63 (SDSPLTLSGSSPPASDSAICSDEYTGGSSVKSRSE) and 159 to 178 (SNSSSNSSSSNTSANGSPPR). Polar residues-rich tracts occupy residues 31 to 42 (SPLTLSGSSPPA) and 54 to 63 (GGSSVKSRSE). Residues 159 to 175 (SNSSSNSSSSNTSANGS) show a composition bias toward low complexity. The B box-type 1; atypical zinc-finger motif lies at 174–222 (GSPPRCTACKSKCSDAVAKCFECQSYLCANCVTAHEFMHCFNGHNVCLI). Zn(2+) contacts are provided by Cys-179, Cys-182, Cys-204, His-208, Cys-328, His-331, Cys-351, and His-356. Residues 323–366 (QRQLFCPRHKQELLKFSCRTCCILVCKECIVLEHSTGLHELENV) form a B box-type 2 zinc finger. A compositionally biased stretch (polar residues) spans 543–554 (GPTGMSLTSNGH). Positions 543-606 (GPTGMSLTSN…TAHHQQLQAQ (64 aa)) are disordered. The segment covering 565–577 (QSASNSSASSAGS) has biased composition (low complexity). Residues 579 to 598 (HHGHHQQSHHHGHHNHHQTA) show a composition bias toward basic residues. NHL repeat units follow at residues 767–810 (HCKF…FDKE), 814–859 (KFQF…YNQY), 860–901 (GQFV…FDQN), 902–944 (GNVL…FNYE), and 945–988 (GQYL…FTQD).

In terms of assembly, interacts with nanos (nos) and pum. Acts via the formation of a quaternary complex composed of pum, nanos, brat and the 3'-UTR mRNA of hb. Not recruited by nanos and pum to cyclin B 3'-UTR mRNA. Might interact with mira; the interaction seems to be important for brat localization during mitosis. Interacts with Ago1. In terms of tissue distribution, expressed during embryogenesis, mainly in nervous tissues. Expressed in the embryonic central and peripheral nervous systems including the embryonic brain. In third instar larva it is expressed in the larval central nervous system including the brain and the ventral ganglion, in two glands (the ring gland and the salivary gland, and in parts of the foregut) the gastric caeca and the proventriculus.

The protein resides in the cytoplasm. It localises to the cell cortex. Functionally, a NHL-domain family protein that functions as a translational repressor to inhibit cell proliferation. Plays a central role in translation repression of hb mRNA by being recruited by nanos (nos) and pum to the Nanos Response Element (NRE), a 16 bp sequence in the hb mRNA 3'-UTR. Probably recruited by other proteins to repress translation of other mRNAs in other tissues. Negatively regulates expression of Myc in a 3'-UTR dependent manner in both neural progenitor and epithelial cells. Regulates expression of mei-P26, possibly at transcriptional level. Involved in the regulation of ribosomal RNA synthesis and cell growth. Participates in abdominal segmentation and imaginal disk development. During neuroblast division, segregates asymmetrically and inhibits self-renewal of one of the two daughter cells. Together with the asymmetrically segregating transcription factor prospero ensures that the daughter cell will stop growing, exit the cell cycle, and differentiate into neurons possibly by modulating the function of dm in ganglion mother cells (GMC). Restricts developmental potential of type II intermediary neuronal progenitor (INP) cells playing a role in proliferation and maturation of the neuroblasts. The protein is Protein brain tumor of Drosophila melanogaster (Fruit fly).